A 193-amino-acid polypeptide reads, in one-letter code: Peptidyl-tRNA hydrolase (193 aa).

Tyr-16 serves as a coordination point for tRNA. His-21 (proton acceptor) is an active-site residue. 3 residues coordinate tRNA: Phe-67, Asn-69, and Asn-115.

This sequence belongs to the PTH family. Monomer.

It is found in the cytoplasm. The enzyme catalyses an N-acyl-L-alpha-aminoacyl-tRNA + H2O = an N-acyl-L-amino acid + a tRNA + H(+). Its function is as follows. Hydrolyzes ribosome-free peptidyl-tRNAs (with 1 or more amino acids incorporated), which drop off the ribosome during protein synthesis, or as a result of ribosome stalling. Functionally, catalyzes the release of premature peptidyl moieties from peptidyl-tRNA molecules trapped in stalled 50S ribosomal subunits, and thus maintains levels of free tRNAs and 50S ribosomes. The protein is Peptidyl-tRNA hydrolase of Baumannia cicadellinicola subsp. Homalodisca coagulata.